Consider the following 313-residue polypeptide: Homoserine O-succinyltransferase (313 aa).

Residue Cys-142 is the Acyl-thioester intermediate of the active site. Substrate is bound by residues Lys-163 and Ser-192. The Proton acceptor role is filled by His-235. The active site involves Glu-237. Position 249 (Arg-249) interacts with substrate.

The protein belongs to the MetA family.

Its subcellular location is the cytoplasm. It catalyses the reaction L-homoserine + succinyl-CoA = O-succinyl-L-homoserine + CoA. Its pathway is amino-acid biosynthesis; L-methionine biosynthesis via de novo pathway; O-succinyl-L-homoserine from L-homoserine: step 1/1. Its function is as follows. Transfers a succinyl group from succinyl-CoA to L-homoserine, forming succinyl-L-homoserine. This is Homoserine O-succinyltransferase from Vibrio parahaemolyticus serotype O3:K6 (strain RIMD 2210633).